We begin with the raw amino-acid sequence, 411 residues long: Arginine deiminase (411 aa).

Cysteine 401 functions as the Amidino-cysteine intermediate in the catalytic mechanism.

Belongs to the arginine deiminase family.

The protein localises to the cytoplasm. It catalyses the reaction L-arginine + H2O = L-citrulline + NH4(+). It functions in the pathway amino-acid degradation; L-arginine degradation via ADI pathway; carbamoyl phosphate from L-arginine: step 1/2. This Staphylococcus haemolyticus (strain JCSC1435) protein is Arginine deiminase.